The sequence spans 112 residues: Cytoplasmic envelopment protein 3 (112 aa).

Residue Gly2 is the site of N-myristoyl glycine; by host attachment. The disordered stretch occupies residues 84-112; that stretch reads GANKGGGKRTSSLKSAKNGAGVKKKVRAL.

It belongs to the herpesviridae cytoplasmic envelopment protein 3 family. In terms of assembly, interacts with cytoplasmic envelopment protein 2; this interaction is essential for the proper localization of each protein to the assembly complex and thus for the production of infectious virus. In terms of processing, myristoylation and palmitoylation (probably on one or more of the nearby cysteines at the N-terminus) enable membrane-binding and Golgi apparatus-specific targeting and are essential for efficient packaging. Post-translationally, phosphorylated. Phosphorylation does not seem to be required for recycling to the host Golgi apparatus. Packaging is selective for underphosphorylated forms.

Its subcellular location is the virion tegument. The protein localises to the virion membrane. The protein resides in the host cell membrane. It localises to the host Golgi apparatus membrane. In terms of biological role, plays an important role in the cytoplasmic envelopment of tegument proteins and capsids during the assembly and egress processes. Also participates in viral entry at the fusion step probably by regulating the core fusion machinery. The protein is Cytoplasmic envelopment protein 3 (UL99) of Murid herpesvirus 1 (strain K181) (MuHV-1).